Reading from the N-terminus, the 282-residue chain is Probable endonuclease 4 (282 aa).

The Zn(2+) site is built by H69, H109, E145, D179, H182, H216, D229, H231, and E261.

It belongs to the AP endonuclease 2 family. It depends on Zn(2+) as a cofactor.

The enzyme catalyses Endonucleolytic cleavage to 5'-phosphooligonucleotide end-products.. Its function is as follows. Endonuclease IV plays a role in DNA repair. It cleaves phosphodiester bonds at apurinic or apyrimidinic (AP) sites, generating a 3'-hydroxyl group and a 5'-terminal sugar phosphate. The polypeptide is Probable endonuclease 4 (Campylobacter fetus subsp. fetus (strain 82-40)).